Consider the following 28-residue polypeptide: Potassium channel toxin alpha-KTx 9.3 (28 aa).

Cystine bridges form between cysteine 3-cysteine 19, cysteine 6-cysteine 24, and cysteine 10-cysteine 26.

It belongs to the short scorpion toxin superfamily. Potassium channel inhibitor family. Alpha-KTx 09 subfamily. In terms of tissue distribution, expressed by the venom gland.

The protein localises to the secreted. Its function is as follows. Inhibits voltage-gated potassium channels. This Aegaeobuthus nigrocinctus (Scorpion) protein is Potassium channel toxin alpha-KTx 9.3.